A 719-amino-acid chain; its full sequence is ATP-dependent RNA helicase p62 (719 aa).

Positions 94-234 are disordered; it reads AQSQRAFRDS…GSQDLPMRPV (141 aa). Basic and acidic residues-rich tracts occupy residues 99–108 and 137–171; these read AFRDSSKPDS and EEIKIEGVMAPHDRDFGHSGRGGRGGDRGGDDRRG. Residues 172 to 188 are compositionally biased toward gly residues; sequence GGGGGNRFGGGGGGGDY. Residues 194–205 are compositionally biased toward basic and acidic residues; sequence GRVEKRRDDRGG. Residues 206 to 226 are compositionally biased toward gly residues; it reads GNRFGGGGGFGDRRGGGGGGS. Positions 281–309 match the Q motif motif; the sequence is QDFSEVHLPDYVMKEIRRQGYKAPTAIQA. Residues 312 to 487 enclose the Helicase ATP-binding domain; it reads WPIAMSGSNF…EDFLGNYIQI (176 aa). 325-332 serves as a coordination point for ATP; the sequence is AKTGSGKT. The DEAD box signature appears at 435–438; that stretch reads DEAD. The Helicase C-terminal domain maps to 519–664; the sequence is LLSDIYDTSE…EINPALENLA (146 aa). Positions 689–719 are disordered; that stretch reads GGGFKKGSLSNGRGFGGGGGGGGEGRHSRFD. Over residues 701-711 the composition is skewed to gly residues; the sequence is RGFGGGGGGGG.

It belongs to the DEAD box helicase family. DDX5/DBP2 subfamily. In terms of assembly, interacts with Fmr1 to form the RNA-induced silencing complex (RISC), a ribonucleoprotein (RNP) complex involved in translation regulation, other components of the complex are RpL5, RpL11, AGO2 and Dcr-1.

It localises to the nucleus. The protein localises to the nucleolus. The protein resides in the cytoplasm. Its subcellular location is the cytosol. It catalyses the reaction ATP + H2O = ADP + phosphate + H(+). As an RNA helicase, unwinds RNA and alters RNA structures through ATP binding and hydrolysis. Involved in multiple cellular processes, including pre-mRNA splicing, alternative splicing, rRNA processing and miRNA processing, as well as transcription regulation. Plays a role in innate immunity. Specifically restricts bunyavirus infection, including Rift Valley fever virus (RVFV) or La Crosse virus (LACV), but not vesicular stomatitis virus (VSV), in an interferon- and DROSHA-independent manner. The protein is ATP-dependent RNA helicase p62 (Rm62) of Drosophila melanogaster (Fruit fly).